Consider the following 311-residue polypeptide: Protein N-terminal asparagine amidohydrolase (311 aa).

Monomer.

Its subcellular location is the cytoplasm. The catalysed reaction is N-terminal L-asparaginyl-[protein] + H2O + H(+) = N-terminal L-aspartyl-[protein] + NH4(+). Functionally, N-terminal asparagine deamidase that mediates deamidation of N-terminal asparagine residues to aspartate. Required for the ubiquitin-dependent turnover of intracellular proteins that initiate with Met-Asn. These proteins are acetylated on the retained initiator methionine and can subsequently be modified by the removal of N-acetyl methionine by acylaminoacid hydrolase (AAH). Conversion of the resulting N-terminal asparagine to aspartate by NTAN1/PNAD renders the protein susceptible to arginylation, polyubiquitination and degradation as specified by the N-end rule. This enzyme does not act on substrates with internal or C-terminal asparagines and does not act on glutamine residues in any position. This chain is Protein N-terminal asparagine amidohydrolase (NTAN1), found in Sus scrofa (Pig).